We begin with the raw amino-acid sequence, 235 residues long: Post-translational flagellin modification protein B (235 aa).

Belongs to the CMP-NeuNAc synthase family.

Its function is as follows. Required for biosynthesis of LAH modification in the post-translational modification of Campylobacter coli flagellin. The polypeptide is Post-translational flagellin modification protein B (ptmB) (Campylobacter coli).